The sequence spans 186 residues: Nicotinamidase/pyrazinamidase (186 aa).

The Proton acceptor role is filled by aspartate 8. Residues aspartate 49, histidine 51, histidine 57, and histidine 71 each contribute to the Fe cation site. Lysine 96 is an active-site residue. Residue cysteine 138 is the Nucleophile of the active site.

Belongs to the isochorismatase family. In terms of assembly, monomer. It depends on Mn(2+) as a cofactor. Fe(2+) is required as a cofactor.

It carries out the reaction nicotinamide + H2O = nicotinate + NH4(+). The enzyme catalyses pyrazinamide + H2O = pyrazine-2-carboxylate + NH4(+). Its pathway is cofactor biosynthesis; nicotinate biosynthesis; nicotinate from nicotinamide: step 1/1. With respect to regulation, is inhibited by Cu(2+), Zn(2+) and Fe(3+). In terms of biological role, catalyzes the deamidation of nicotinamide (NAM) into nicotinate. Likely functions in the cyclical salvage pathway for production of NAD from nicotinamide. Its function is as follows. Is involved in the activation of the first-line antituberculous drug pyrazinamide (PZA) by converting it into the active form, pyrazinoic acid. In Mycobacterium tuberculosis (strain ATCC 25618 / H37Rv), this protein is Nicotinamidase/pyrazinamidase.